Consider the following 139-residue polypeptide: Natriuretic peptides A (139 aa).

Positions methionine 1–serine 21 are cleaved as a signal peptide. Residues histidine 22–arginine 114 constitute a propeptide that is removed on maturation. Cysteine 118 and cysteine 134 are joined by a disulfide.

Belongs to the natriuretic peptide family.

The protein localises to the secreted. Its function is as follows. Hormone playing a key role in cardiovascular homeostasis through regulation of natriuresis, diuresis, and vasodilation. Has a cGMP-stimulating activity. This is Natriuretic peptides A (nppa) from Takifugu rubripes (Japanese pufferfish).